Reading from the N-terminus, the 468-residue chain is Putative ankyrin repeat protein R873 (468 aa).

ANK repeat units lie at residues 38–68 (IKTD…KHNL), 78–107 (SLNE…DIEG), 109–137 (DNCA…NFRA), 138–167 (NNDK…DIRS), 169–197 (NDCS…NIRT), 198–227 (NDDW…DIRS), 229–257 (DDHA…NIIA), 258–287 (EDNY…NITS), 289–316 (YYTI…NIRD), 317–346 (CDSS…DFRE), 348–376 (DDLT…DFRV), 378–406 (DDYP…DVRA), 407–436 (EDDY…NIRA), and 438–466 (NDYA…VLNK).

This Acanthamoeba polyphaga mimivirus (APMV) protein is Putative ankyrin repeat protein R873.